A 234-amino-acid polypeptide reads, in one-letter code: 2-C-methyl-D-erythritol 4-phosphate cytidylyltransferase (234 aa).

It belongs to the IspD/TarI cytidylyltransferase family. IspD subfamily.

It carries out the reaction 2-C-methyl-D-erythritol 4-phosphate + CTP + H(+) = 4-CDP-2-C-methyl-D-erythritol + diphosphate. Its pathway is isoprenoid biosynthesis; isopentenyl diphosphate biosynthesis via DXP pathway; isopentenyl diphosphate from 1-deoxy-D-xylulose 5-phosphate: step 2/6. In terms of biological role, catalyzes the formation of 4-diphosphocytidyl-2-C-methyl-D-erythritol from CTP and 2-C-methyl-D-erythritol 4-phosphate (MEP). This chain is 2-C-methyl-D-erythritol 4-phosphate cytidylyltransferase, found in Pseudomonas paraeruginosa (strain DSM 24068 / PA7) (Pseudomonas aeruginosa (strain PA7)).